The following is a 315-amino-acid chain: Small ribosomal subunit protein uS9m (315 aa).

A mitochondrion-targeting transit peptide spans 1 to 42; that stretch reads MMASLRHSITSALRSSRQGCSKSAQWQSLDQQFGALRISSRS. The tract at residues 293 to 315 is disordered; that stretch reads PRKVERKKHGHVKARKMPTWVKR. Positions 296 to 315 are enriched in basic residues; sequence VERKKHGHVKARKMPTWVKR.

This sequence belongs to the universal ribosomal protein uS9 family. In terms of assembly, component of the mitochondrial small ribosomal subunit (mt-SSU). Mature N.crassa 74S mitochondrial ribosomes consist of a small (37S) and a large (54S) subunit. The 37S small subunit contains a 16S ribosomal RNA (16S mt-rRNA) and 32 different proteins. The 54S large subunit contains a 23S rRNA (23S mt-rRNA) and 42 different proteins.

It localises to the mitochondrion. Component of the mitochondrial ribosome (mitoribosome), a dedicated translation machinery responsible for the synthesis of mitochondrial genome-encoded proteins, including at least some of the essential transmembrane subunits of the mitochondrial respiratory chain. The mitoribosomes are attached to the mitochondrial inner membrane and translation products are cotranslationally integrated into the membrane. The protein is Small ribosomal subunit protein uS9m (mrp-9) of Neurospora crassa (strain ATCC 24698 / 74-OR23-1A / CBS 708.71 / DSM 1257 / FGSC 987).